The chain runs to 359 residues: Protein mab-21-like 2 (359 aa).

This sequence belongs to the mab-21 family.

Its subcellular location is the nucleus. It is found in the cytoplasm. Its function is as follows. Required for several aspects of embryonic development including normal development of the eye. This chain is Protein mab-21-like 2 (mab21l2), found in Xenopus tropicalis (Western clawed frog).